Here is a 562-residue protein sequence, read N- to C-terminus: uncharacterized protein (562 aa).

5 helical membrane passes run 15–34 (WGGGVAHSVLILSLVIAFGI), 41–63 (VAGISLGVTWILFVGIVFGHFNL), 78–97 (LILFVYSIGLQVGPGFFSAF), 104–126 (LNMLAMIVVFAGVIITLALHFIT), and 165–187 (IALGYAVAYPLGVVGCIMSLLGL). 2 RCK C-terminal domains span residues 204-286 (QGLG…ITAF) and 289-374 (KPIE…VLGN). A run of 6 helical transmembrane segments spans residues 384–403 (LIPIFLGIALGCILGSIPFM), 413–430 (LGLAGGPLIVSILISRFG), 450–472 (IGISLFLACVGLGAGDGFVETII), 476–498 (GYVWIAYGMIITIVPLLLAGFIG), 505–524 (NYYTLIGVLAGSTTNPPALA), and 539–561 (YATVYPLTMFLRVLTAQLLILSL).

This sequence belongs to the AAE transporter (TC 2.A.81) family.

The protein localises to the cell membrane. This is an uncharacterized protein from Bacteroides fragilis (strain YCH46).